Here is a 205-residue protein sequence, read N- to C-terminus: Outer-membrane lipoprotein LolB (205 aa).

A signal peptide spans 1 to 17; the sequence is MFLRHFIVFSFIALLAG. Cysteine 18 is lipidated: N-palmitoyl cysteine. The S-diacylglycerol cysteine moiety is linked to residue cysteine 18.

Belongs to the LolB family. Monomer.

Its subcellular location is the cell outer membrane. Plays a critical role in the incorporation of lipoproteins in the outer membrane after they are released by the LolA protein. This is Outer-membrane lipoprotein LolB from Pseudomonas fluorescens (strain ATCC BAA-477 / NRRL B-23932 / Pf-5).